Here is a 274-residue protein sequence, read N- to C-terminus: Hydroxyethylthiazole kinase (274 aa).

Met-50 provides a ligand contact to substrate. ATP is bound by residues Arg-126 and Ser-171. Position 200 (Ala-200) interacts with substrate.

The protein belongs to the Thz kinase family. Mg(2+) is required as a cofactor.

It catalyses the reaction 5-(2-hydroxyethyl)-4-methylthiazole + ATP = 4-methyl-5-(2-phosphooxyethyl)-thiazole + ADP + H(+). Its pathway is cofactor biosynthesis; thiamine diphosphate biosynthesis; 4-methyl-5-(2-phosphoethyl)-thiazole from 5-(2-hydroxyethyl)-4-methylthiazole: step 1/1. In terms of biological role, catalyzes the phosphorylation of the hydroxyl group of 4-methyl-5-beta-hydroxyethylthiazole (THZ). The protein is Hydroxyethylthiazole kinase of Acinetobacter baylyi (strain ATCC 33305 / BD413 / ADP1).